We begin with the raw amino-acid sequence, 615 residues long: Putative lipase ATG15 (615 aa).

The Cytoplasmic portion of the chain corresponds to 1–22; it reads MKQLGEEHPLISTKRPRAKKRR. Residues 23–43 form a helical; Signal-anchor for type II membrane protein membrane-spanning segment; that stretch reads SIAICAAVLTLIAFGFIRFVP. Residues 44–615 are Lumenal-facing; the sequence is KDILAGGWYE…NSAAHHVSSI (572 aa). N-linked (GlcNAc...) asparagine glycosylation is found at Asn-253, Asn-276, and Asn-360. Catalysis depends on Ser-378, which acts as the Charge relay system. Residues 520–559 are disordered; that stretch reads NKNDEPPLPNPLHPKPPSTVRSSNMPHEQSPNASRSLSSL. Pro residues predominate over residues 525–536; the sequence is PPLPNPLHPKPP. Residues 538–559 are compositionally biased toward polar residues; that stretch reads TVRSSNMPHEQSPNASRSLSSL. N-linked (GlcNAc...) asparagine glycosylation is present at Asn-551.

This sequence belongs to the AB hydrolase superfamily. Lipase family. In terms of assembly, binds to both phosphatidylinositol (PI) and phosphatidylinositol 3,5-bisphosphate (PIP2).

It localises to the endosome. It is found in the multivesicular body membrane. Its subcellular location is the prevacuolar compartment membrane. It catalyses the reaction a triacylglycerol + H2O = a diacylglycerol + a fatty acid + H(+). Lipase which is essential for lysis of subvacuolar cytoplasm to vacuole targeted bodies and intravacuolar autophagic bodies. Involved in the lysis of intravacuolar multivesicular body (MVB) vesicles. The intravacuolar membrane disintegration by ATG15 is critical to life span extension. The polypeptide is Putative lipase ATG15 (ATG15) (Debaryomyces hansenii (strain ATCC 36239 / CBS 767 / BCRC 21394 / JCM 1990 / NBRC 0083 / IGC 2968) (Yeast)).